Reading from the N-terminus, the 517-residue chain is ATP synthase subunit alpha 1 (517 aa).

Position 174 to 181 (174 to 181) interacts with ATP; it reads GDRQTGKT.

It belongs to the ATPase alpha/beta chains family. As to quaternary structure, F-type ATPases have 2 components, CF(1) - the catalytic core - and CF(0) - the membrane proton channel. CF(1) has five subunits: alpha(3), beta(3), gamma(1), delta(1), epsilon(1). CF(0) has three main subunits: a(1), b(2) and c(9-12). The alpha and beta chains form an alternating ring which encloses part of the gamma chain. CF(1) is attached to CF(0) by a central stalk formed by the gamma and epsilon chains, while a peripheral stalk is formed by the delta and b chains.

The protein localises to the cell inner membrane. The enzyme catalyses ATP + H2O + 4 H(+)(in) = ADP + phosphate + 5 H(+)(out). Produces ATP from ADP in the presence of a proton gradient across the membrane. The alpha chain is a regulatory subunit. The polypeptide is ATP synthase subunit alpha 1 (Albidiferax ferrireducens (strain ATCC BAA-621 / DSM 15236 / T118) (Rhodoferax ferrireducens)).